The sequence spans 438 residues: 3-phosphoshikimate 1-carboxyvinyltransferase (438 aa).

K25, S26, and R30 together coordinate 3-phosphoshikimate. K25 lines the phosphoenolpyruvate pocket. Phosphoenolpyruvate-binding residues include G99 and R128. S173, Q175, D325, and K352 together coordinate 3-phosphoshikimate. Q175 is a binding site for phosphoenolpyruvate. D325 functions as the Proton acceptor in the catalytic mechanism. Residues R356 and R398 each coordinate phosphoenolpyruvate.

The protein belongs to the EPSP synthase family. In terms of assembly, monomer.

It localises to the cytoplasm. The enzyme catalyses 3-phosphoshikimate + phosphoenolpyruvate = 5-O-(1-carboxyvinyl)-3-phosphoshikimate + phosphate. The protein operates within metabolic intermediate biosynthesis; chorismate biosynthesis; chorismate from D-erythrose 4-phosphate and phosphoenolpyruvate: step 6/7. Functionally, catalyzes the transfer of the enolpyruvyl moiety of phosphoenolpyruvate (PEP) to the 5-hydroxyl of shikimate-3-phosphate (S3P) to produce enolpyruvyl shikimate-3-phosphate and inorganic phosphate. The chain is 3-phosphoshikimate 1-carboxyvinyltransferase from Prochlorococcus marinus subsp. pastoris (strain CCMP1986 / NIES-2087 / MED4).